The primary structure comprises 1108 residues: Retinal guanylyl cyclase 2 (1108 aa).

The first 50 residues, 1–50 (MFLGPWPFSRLLSWFAISSRLSGQHGLPSSKFLRCLCLLALLPLLRWGQA), serve as a signal peptide directing secretion. Over 51 to 469 (LPYKIGVIGP…CQGGIDPALA (419 aa)) the chain is Extracellular. The cysteines at positions 104 and 132 are disulfide-linked. Residues 470 to 490 (MMVCFALLIALLSINGFAYFI) traverse the membrane as a helical segment. Residues 491-1108 (RRRINKIQLI…AERQLVRNKP (618 aa)) are Cytoplasmic-facing. The Protein kinase domain maps to 532-812 (FQIISEVQSG…DEIFNQFKTF (281 aa)). Residues 884-1014 (TLYFSDIVGF…DTVNTASRME (131 aa)) form the Guanylate cyclase domain.

This sequence belongs to the adenylyl cyclase class-4/guanylyl cyclase family. As to quaternary structure, homodimer. Interacts with RD3; promotes the exit of GUCY2F from the endoplasmic reticulum and its trafficking to the photoreceptor outer segments. Post-translationally, there are 9 conserved cysteine residues in sensory guanylate cyclases, 6 in the extracellular domain, which may be involved in intra- or interchain disulfide bonds. In terms of tissue distribution, retina.

The protein resides in the membrane. It localises to the photoreceptor outer segment membrane. The catalysed reaction is GTP = 3',5'-cyclic GMP + diphosphate. Activated by GUCA1B when free calcium ions concentration is low, and inhibited by GUCA1B when free calcium ions concentration is high. Inhibited by RD3. Responsible for the synthesis of cyclic GMP (cGMP) in rods and cones of photoreceptors. Plays an essential role in phototransduction, by mediating cGMP replenishment. May also participate in the trafficking of membrane-asociated proteins to the photoreceptor outer segment membrane. The polypeptide is Retinal guanylyl cyclase 2 (Mus musculus (Mouse)).